We begin with the raw amino-acid sequence, 598 residues long: Elongation factor 4 (598 aa).

The tr-type G domain occupies 2–184 (KNIRNFSIIA…EIVRKIPAPE (183 aa)). Residues 14–19 (DHGKST) and 131–134 (NKID) each bind GTP.

It belongs to the TRAFAC class translation factor GTPase superfamily. Classic translation factor GTPase family. LepA subfamily.

Its subcellular location is the cell inner membrane. The enzyme catalyses GTP + H2O = GDP + phosphate + H(+). Functionally, required for accurate and efficient protein synthesis under certain stress conditions. May act as a fidelity factor of the translation reaction, by catalyzing a one-codon backward translocation of tRNAs on improperly translocated ribosomes. Back-translocation proceeds from a post-translocation (POST) complex to a pre-translocation (PRE) complex, thus giving elongation factor G a second chance to translocate the tRNAs correctly. Binds to ribosomes in a GTP-dependent manner. This chain is Elongation factor 4, found in Histophilus somni (strain 2336) (Haemophilus somnus).